A 180-amino-acid polypeptide reads, in one-letter code: NADH-quinone oxidoreductase subunit I (180 aa).

4Fe-4S ferredoxin-type domains lie at 50–80 and 90–119; these read LTRD…LQKA and EFFR…LTPD. [4Fe-4S] cluster is bound by residues Cys60, Cys63, Cys66, Cys70, Cys99, Cys102, Cys105, and Cys109.

Belongs to the complex I 23 kDa subunit family. In terms of assembly, NDH-1 is composed of 13 different subunits. Subunits NuoA, H, J, K, L, M, N constitute the membrane sector of the complex. Requires [4Fe-4S] cluster as cofactor.

It localises to the cell inner membrane. It catalyses the reaction a quinone + NADH + 5 H(+)(in) = a quinol + NAD(+) + 4 H(+)(out). NDH-1 shuttles electrons from NADH, via FMN and iron-sulfur (Fe-S) centers, to quinones in the respiratory chain. The immediate electron acceptor for the enzyme in this species is believed to be ubiquinone. Couples the redox reaction to proton translocation (for every two electrons transferred, four hydrogen ions are translocated across the cytoplasmic membrane), and thus conserves the redox energy in a proton gradient. The polypeptide is NADH-quinone oxidoreductase subunit I (Pectobacterium atrosepticum (strain SCRI 1043 / ATCC BAA-672) (Erwinia carotovora subsp. atroseptica)).